The sequence spans 209 residues: Ribonuclease HII (209 aa).

The region spanning glutamine 20–isoleucine 209 is the RNase H type-2 domain. A divalent metal cation-binding residues include aspartate 26, glutamate 27, and aspartate 122.

It belongs to the RNase HII family. It depends on Mn(2+) as a cofactor. The cofactor is Mg(2+).

The protein localises to the cytoplasm. It catalyses the reaction Endonucleolytic cleavage to 5'-phosphomonoester.. Endonuclease that specifically degrades the RNA of RNA-DNA hybrids. The polypeptide is Ribonuclease HII (Prochlorococcus marinus (strain MIT 9515)).